The sequence spans 318 residues: Porphobilinogen deaminase (318 aa).

Cysteine 241 bears the S-(dipyrrolylmethanemethyl)cysteine mark.

This sequence belongs to the HMBS family. Monomer. Dipyrromethane serves as cofactor.

It catalyses the reaction 4 porphobilinogen + H2O = hydroxymethylbilane + 4 NH4(+). It functions in the pathway porphyrin-containing compound metabolism; protoporphyrin-IX biosynthesis; coproporphyrinogen-III from 5-aminolevulinate: step 2/4. In terms of biological role, tetrapolymerization of the monopyrrole PBG into the hydroxymethylbilane pre-uroporphyrinogen in several discrete steps. This is Porphobilinogen deaminase from Geobacter sp. (strain M21).